We begin with the raw amino-acid sequence, 392 residues long: Na(+)/H(+) antiporter NhaA (392 aa).

The next 11 membrane-spanning stretches (helical) occupy residues 17–37, 59–79, 95–115, 125–145, 154–174, 179–199, 213–233, 254–274, 290–310, 328–348, and 363–383; these read ILLI…LSAL, LILW…GLEV, IFPA…YLFF, GWAI…ALLG, VFLL…IALF, VALV…ILNW, FILW…GVIV, VLHP…NAGV, VGIA…FSWV, IFAV…IAGL, and LGIL…LNSV.

The protein belongs to the NhaA Na(+)/H(+) (TC 2.A.33) antiporter family.

It is found in the cell inner membrane. It carries out the reaction Na(+)(in) + 2 H(+)(out) = Na(+)(out) + 2 H(+)(in). Its function is as follows. Na(+)/H(+) antiporter that extrudes sodium in exchange for external protons. This chain is Na(+)/H(+) antiporter NhaA, found in Proteus mirabilis (strain HI4320).